Here is a 121-residue protein sequence, read N- to C-terminus: Small ribosomal subunit protein uS13 (121 aa).

The segment at 98-121 is disordered; it reads RGQKTRNNAHTVKGKPKSIAGKKK. A compositionally biased stretch (basic residues) spans 109 to 121; the sequence is VKGKPKSIAGKKK.

Belongs to the universal ribosomal protein uS13 family. Part of the 30S ribosomal subunit. Forms a loose heterodimer with protein S19. Forms two bridges to the 50S subunit in the 70S ribosome.

In terms of biological role, located at the top of the head of the 30S subunit, it contacts several helices of the 16S rRNA. In the 70S ribosome it contacts the 23S rRNA (bridge B1a) and protein L5 of the 50S subunit (bridge B1b), connecting the 2 subunits; these bridges are implicated in subunit movement. Contacts the tRNAs in the A and P-sites. The chain is Small ribosomal subunit protein uS13 from Phytoplasma australiense.